The sequence spans 151 residues: Large ribosomal subunit protein uL13 (151 aa).

The protein belongs to the universal ribosomal protein uL13 family. In terms of assembly, part of the 50S ribosomal subunit.

Its function is as follows. This protein is one of the early assembly proteins of the 50S ribosomal subunit, although it is not seen to bind rRNA by itself. It is important during the early stages of 50S assembly. This is Large ribosomal subunit protein uL13 from Microcystis aeruginosa (strain NIES-843 / IAM M-2473).